An 85-amino-acid chain; its full sequence is HssA/B-like protein 59 (85 aa).

Belongs to the hssA/B family.

The protein is HssA/B-like protein 59 (hssl59) of Dictyostelium discoideum (Social amoeba).